Reading from the N-terminus, the 580-residue chain is MAFMEKPPARKVLLDDTVPLTAAVEASQSLQSHTEYIIRVQRGISAENSWQIVRRYSDFDLLNNSLQITGLSLPLPPKKLIGNMDREFIAERQKGLQNYLNVIMANHVLSNCELLKKFLDPNNYSANYTEIALQQVSMFFRSEPKWEVVEPLKDIGWRIRKKYFLMKIKNQPKERLVLSWADLGPDKYLSDKDFQCLIKLLPSCVHPYIYRVTFATASESSALLIRTFNDKGTLKDLIYKAKPKDPFLKKYCNPKKTQGLELQQIKTYGRQILEVLKFLHDKGFPYGHLHAANVMLDGNTCRLLDLENSLLGLPSFYRSYFTQFRKINTLESVDVHCFGHLLYEMTYGRPPDSVPVDSFPPASSMAVVAVLESTLSCEACKNGMPTVSRLLQMPLFSDVLLTTSEKPQFKIPTKLREALRIAKECIEKRLTEEQKQIHQHRRLTRAQSHHGSEEERKRRKILARKKSKRSAVENSEEQPVKHSNANNSAGSGASSPLTSPSSPTPPSTAGLSSALPPPPPPPPPPPPPAGPSPGTEMPAPPLPQAVNGVNRGALLSSIQNFQKGTLRKAKTCDHSAPKIG.

The PX domain occupies 14-126 (LDDTVPLTAA…KFLDPNNYSA (113 aa)). The 394-residue stretch at 88–481 (FIAERQKGLQ…VENSEEQPVK (394 aa)) folds into the Protein kinase domain. The disordered stretch occupies residues 433–551 (EQKQIHQHRR…LPQAVNGVNR (119 aa)). Composition is skewed to basic residues over residues 437–448 (IHQHRRLTRAQS) and 457–469 (KRRK…KSKR). Positions 483–514 (SNANNSAGSGASSPLTSPSSPTPPSTAGLSSA) are enriched in low complexity. The span at 515-531 (LPPPPPPPPPPPPPAGP) shows a compositional bias: pro residues. In terms of domain architecture, WH2 spans 549 to 568 (VNRGALLSSIQNFQKGTLRK).

The protein belongs to the protein kinase superfamily.

It localises to the cytoplasm. The protein localises to the cell membrane. Its function is as follows. Binds to and modulates brain Na,K-ATPase subunits ATP1B1 and ATP1B3 and may thereby participate in the regulation of electrical excitability and synaptic transmission. May not display kinase activity. This chain is PX domain-containing protein kinase-like protein, found in Rattus norvegicus (Rat).